Here is a 207-residue protein sequence, read N- to C-terminus: MTCTIDKILQDAKTLLERLKDHDNAAESLIDQSSALHKRVEAMKEVGTAMPEKYQEELADIKDASKLKPHVLLCQENTQIRDLQQENKELWVSLEEHQYALELIMSKYRKQMLQLVANKKPAPTEPVLEAHKTFSSDLECQIDRICVMGDIMRDAIQLDEDKAYNIQEKLAQLELENKELREILSTSKESLHSSKRESEWNFSEKTQ.

2 coiled-coil regions span residues 4–32 and 154–193; these read TIDK…LIDQ and DAIQ…SLHS. The segment at 186-207 is disordered; that stretch reads TSKESLHSSKRESEWNFSEKTQ. Basic and acidic residues predominate over residues 189–199; the sequence is ESLHSSKRESE.

Belongs to the SIKE family. In terms of assembly, interacts with IKBKE and TBK1 via its coiled coil region. Interaction with TBK1 is disrupted upon viral infection or TLR3 stimulation. Interacts with CDC42BPB. Associates with the STRIPAK core complex composed of PP2A catalytic and scaffolding subunits, the striatins (PP2A regulatory subunits), the striatin-associated proteins MOB4, STRIP1 and STRIP2, PDCD10 and members of the STE20 kinases, such as STK24 and STK26.

Suppressor of IKK-epsilon. Associates with the striatin-interacting phosphatase and kinase (STRIPAK) core complex, forming the extended (SIKE1:SLMAP)STRIPAK complex. The (SIKE1:SLMAP)STRIPAK complex dephosphorylates STK3 leading to the inhibition of Hippo signaling and the control of cell growth. The protein is Suppressor of IKBKE 1 (sike1) of Xenopus tropicalis (Western clawed frog).